The sequence spans 651 residues: MFLKRWFIRALHRLQKGPGYGYSELFVWYCNNTNTHGPKRLIIEGPKKKTLWSLFTVTFACLVFWQWGLLIQTYLSWGVSVSLSVGFRGMDFPAVTVCNVNPFKYSKVKPLLKELDELVDILLEQFYSYSTNGTLPVVFPDMRSSYLTGDPPPWYQIPLVMIDETDADNPTVTNVLGTDALSPTNNSTTNSSTEARRYKVAFHLCNTNGTDCFYKNFSSSLEAVKEWYTLQYIDIISKLPLSQKVEMGYSGKDFILTCLFGGEACNYDNFTQFYHSSYGNCYVFNWGLDGNVLIVSNPGVGFGLQLALDVNQEEYIPFLTTRAGARFLLHTQNTFPFVETMGTYALVGTVTSVGILVDEVQRMGQPYGTCTTDGLDVPIDNLYSQYNLSYTMQSCLWSCFQIQMVNSCGCAYYLYPLPEGATYCNNQNNSDWAYCYYLLQDSKDHKNECLQTCIQTCNELQFRISTSMADWPSESSEDWIFHVLSYERDDSTNITMKRDGVLKLNLYFKEFNYRVITESVATNVVWLLSNLGGQFGFWMGGSVLCIIEFGEVFIDCIWIAVIRFVKWYKNRKERQVQAQYADPPPTVSELVEGYTNQGFQPDIINSCSPQAQPPDLYLPTTLEIPGTPPPKYDSLRVHPIDTEHHSDSEDL.

Residues 1–50 (MFLKRWFIRALHRLQKGPGYGYSELFVWYCNNTNTHGPKRLIIEGPKKKT) are Cytoplasmic-facing. A helical membrane pass occupies residues 51–71 (LWSLFTVTFACLVFWQWGLLI). Residues 72-541 (QTYLSWGVSV…GGQFGFWMGG (470 aa)) lie on the Extracellular side of the membrane. Cystine bridges form between cysteine 98-cysteine 281, cysteine 205-cysteine 212, cysteine 258-cysteine 265, cysteine 370-cysteine 457, cysteine 395-cysteine 453, cysteine 399-cysteine 449, cysteine 408-cysteine 435, and cysteine 410-cysteine 424. The chain crosses the membrane as a helical span at residues 542 to 562 (SVLCIIEFGEVFIDCIWIAVI). Topologically, residues 563–651 (RFVKWYKNRK…TEHHSDSEDL (89 aa)) are cytoplasmic. Residues 612-651 (QPPDLYLPTTLEIPGTPPPKYDSLRVHPIDTEHHSDSEDL) are disordered. Over residues 633–651 (DSLRVHPIDTEHHSDSEDL) the composition is skewed to basic and acidic residues.

This sequence belongs to the amiloride-sensitive sodium channel (TC 1.A.6) family. SCNN1B subfamily. In terms of assembly, component of the heterotrimeric epithelial sodium channel (ENaC) composed of an alpha/SCNN1A, a beta/SCNN1B and a gamma/SCNN1G subunit. In terms of tissue distribution, strongly expressed in gill, kidney and rectum and more weakly in brain, eye, liver and muscle.

It is found in the apical cell membrane. Its subcellular location is the cytoplasmic vesicle membrane. It carries out the reaction Na(+)(in) = Na(+)(out). Its activity is regulated as follows. Originally identified and characterized by its inhibition by the diuretic drug amiloride. Functionally, this is one of the three pore-forming subunits of the heterotrimeric epithelial sodium channel (ENaC), a critical regulator of sodium balance and fluid homeostasis. ENaC operates in epithelial tissues, where it mediates the electrodiffusion of sodium ions from extracellular fluid through the apical membrane of cells, with water following osmotically. The sequence is that of Epithelial sodium channel subunit beta from Neoceratodus forsteri (Australian lungfish).